The following is a 306-amino-acid chain: Glycine--tRNA ligase alpha subunit (306 aa).

This sequence belongs to the class-II aminoacyl-tRNA synthetase family. Tetramer of two alpha and two beta subunits.

It localises to the cytoplasm. It catalyses the reaction tRNA(Gly) + glycine + ATP = glycyl-tRNA(Gly) + AMP + diphosphate. The polypeptide is Glycine--tRNA ligase alpha subunit (Aliivibrio fischeri (strain ATCC 700601 / ES114) (Vibrio fischeri)).